The following is a 276-amino-acid chain: Secreted LysM effector LysM10 (276 aa).

The N-terminal stretch at 1 to 22 is a signal peptide; that stretch reads MLLSLVKFGILSVFLLAQEAVA. 3 N-linked (GlcNAc...) asparagine glycosylation sites follow: N27, N104, and N140. The LysM domain maps to 219-264; sequence KTYIAKEDDTCKSISEAQSISTDRLVEVNHLDYSCSSLTSGTALCI. N267 carries an N-linked (GlcNAc...) asparagine glycan.

This sequence belongs to the secreted LysM effector family.

It is found in the secreted. Its function is as follows. Secreted LysM effector that might have a role in sequestration of chitin oligosaccharides (breakdown products of fungal cell walls that are released during invasion and act as triggers of host immunity) to dampen host defense. The chain is Secreted LysM effector LysM10 from Penicillium expansum (Blue mold rot fungus).